The sequence spans 576 residues: Enolase 4 (576 aa).

The tract at residues glutamate 187–proline 232 is disordered. The span at alanine 196–proline 206 shows a compositional bias: low complexity. Residues alanine 207–lysine 217 are compositionally biased toward basic and acidic residues. Residues glutamate 302 and lysine 524 each contribute to the substrate site.

The protein belongs to the enolase family.

The catalysed reaction is (2R)-2-phosphoglycerate = phosphoenolpyruvate + H2O. Its pathway is carbohydrate degradation; glycolysis; pyruvate from D-glyceraldehyde 3-phosphate: step 4/5. In Danio rerio (Zebrafish), this protein is Enolase 4 (eno4).